Here is a 413-residue protein sequence, read N- to C-terminus: Chloramphenicol efflux pump MT0201 (413 aa).

12 consecutive transmembrane segments (helical) span residues 23–43 (LSVLACAAFIYVTAEILPVGA), 55–75 (VVLVGTLLSWYALVAAVTTVP), 89–109 (LVVSLVCLTVSQLVSALAPNF), 110–130 (AVLAAGRVLCAVTHGLLWAVI), 150–170 (IYIGTSLALVVGSPLTAAMSL), 176–196 (LAAVCVTGAAAAVALAARLAL), 226–246 (VLTMIAVTGHFVSYTYIVVII), 256–276 (NLAWLLAAYGVAGLVSVPLVA), 286–306 (AVIVGMTGLTAAFTLLTALAF), 312–332 (AATALLGTGAIVLWGALATAV), 353–373 (GLYVTAFQIGIMAGALLGGLL), and 378–398 (LAMMLTASAGLMGVALFGMTV).

It belongs to the major facilitator superfamily.

The protein localises to the cell membrane. Functionally, active efflux pump that plays an important role in chloramphenicol resistance. This Mycobacterium tuberculosis (strain CDC 1551 / Oshkosh) protein is Chloramphenicol efflux pump MT0201.